The sequence spans 433 residues: GTPase Der (433 aa).

EngA-type G domains lie at 3–167 (NIVA…QDTI) and 174–349 (PKIA…TNKT). GTP contacts are provided by residues 9-16 (GRPNVGKS), 56-60 (DTGGY), 119-122 (NKAD), 180-187 (GRPNVGKS), 227-231 (DTAGI), and 292-295 (NKWD). A KH-like domain is found at 350–433 (QKISTAALNQ…VPVQLVFRKK (84 aa)).

It belongs to the TRAFAC class TrmE-Era-EngA-EngB-Septin-like GTPase superfamily. EngA (Der) GTPase family. Associates with the 50S ribosomal subunit.

Functionally, GTPase that plays an essential role in the late steps of ribosome biogenesis. This chain is GTPase Der, found in Amoebophilus asiaticus (strain 5a2).